A 482-amino-acid chain; its full sequence is Proline--tRNA ligase (482 aa).

This sequence belongs to the class-II aminoacyl-tRNA synthetase family. ProS type 3 subfamily. In terms of assembly, homodimer.

Its subcellular location is the cytoplasm. It catalyses the reaction tRNA(Pro) + L-proline + ATP = L-prolyl-tRNA(Pro) + AMP + diphosphate. Its function is as follows. Catalyzes the attachment of proline to tRNA(Pro) in a two-step reaction: proline is first activated by ATP to form Pro-AMP and then transferred to the acceptor end of tRNA(Pro). This is Proline--tRNA ligase from Thermofilum pendens (strain DSM 2475 / Hrk 5).